We begin with the raw amino-acid sequence, 981 residues long: DNA ligase 4 (981 aa).

ATP contacts are provided by Glu320, Lys322, Arg327, Glu380, Phe424, Glu484, Lys489, Lys506, and Lys508. The active-site N6-AMP-lysine intermediate is the Lys322. Glu380 contacts Mg(2+). Glu484 is a Mg(2+) binding site. A disordered region spans residues 544–563; that stretch reads SEKNNPSSYESGSDSDSDSE. 2 consecutive BRCT domains span residues 721 to 819 and 875 to 980; these read SKAD…PKYV and ERLL…EYAA.

The protein belongs to the ATP-dependent DNA ligase family. Mg(2+) serves as cofactor.

It localises to the nucleus. The catalysed reaction is ATP + (deoxyribonucleotide)n-3'-hydroxyl + 5'-phospho-(deoxyribonucleotide)m = (deoxyribonucleotide)n+m + AMP + diphosphate.. Functionally, DNA ligase involved in DNA non-homologous end joining (NHEJ); required for double-strand break (DSB) repair. This is DNA ligase 4 (LIG4) from Eremothecium gossypii (strain ATCC 10895 / CBS 109.51 / FGSC 9923 / NRRL Y-1056) (Yeast).